A 239-amino-acid chain; its full sequence is Uridylate kinase (239 aa).

An ATP-binding site is contributed by 10 to 13 (KISG). Residues 18-23 (GESGYG) are involved in allosteric activation by GTP. UMP is bound at residue Gly52. Residues Gly53 and Arg57 each contribute to the ATP site. UMP-binding positions include Asp72 and 133 to 140 (TGNPYFTT). ATP contacts are provided by Thr160, Tyr166, and Asp169.

The protein belongs to the UMP kinase family. In terms of assembly, homohexamer.

It is found in the cytoplasm. It carries out the reaction UMP + ATP = UDP + ADP. Its pathway is pyrimidine metabolism; CTP biosynthesis via de novo pathway; UDP from UMP (UMPK route): step 1/1. Allosterically activated by GTP. Inhibited by UTP. Catalyzes the reversible phosphorylation of UMP to UDP. This chain is Uridylate kinase, found in Chlorobaculum tepidum (strain ATCC 49652 / DSM 12025 / NBRC 103806 / TLS) (Chlorobium tepidum).